The primary structure comprises 173 residues: ADP-ribosylation factor-like protein 11 (173 aa).

Residue Gly2 is the site of N-myristoyl glycine attachment. GTP is bound by residues 17 to 24 (GLDCAGKT), 61 to 65 (DIGGQ), and 120 to 123 (NKQE).

Belongs to the small GTPase superfamily. Arf family.

In terms of biological role, may play a role in apoptosis. May act as a tumor suppressor. This is ADP-ribosylation factor-like protein 11 (Arl11) from Rattus norvegicus (Rat).